We begin with the raw amino-acid sequence, 324 residues long: Putative ribose-phosphate pyrophosphokinase 1 (324 aa).

ATP is bound by residues 43-45 and 102-103; these read DGE and RQ. Mg(2+) is bound at residue histidine 136. Residues aspartate 225 and 229–233 contribute to the D-ribose 5-phosphate site; that span reads NTGQT.

This sequence belongs to the ribose-phosphate pyrophosphokinase family. Class I subfamily. Homohexamer. The cofactor is Mg(2+).

It localises to the cytoplasm. The enzyme catalyses D-ribose 5-phosphate + ATP = 5-phospho-alpha-D-ribose 1-diphosphate + AMP + H(+). The protein operates within metabolic intermediate biosynthesis; 5-phospho-alpha-D-ribose 1-diphosphate biosynthesis; 5-phospho-alpha-D-ribose 1-diphosphate from D-ribose 5-phosphate (route I): step 1/1. Its function is as follows. Involved in the biosynthesis of the central metabolite phospho-alpha-D-ribosyl-1-pyrophosphate (PRPP) via the transfer of pyrophosphoryl group from ATP to 1-hydroxyl of ribose-5-phosphate (Rib-5-P). The sequence is that of Putative ribose-phosphate pyrophosphokinase 1 from Enterococcus faecalis (strain ATCC 700802 / V583).